Consider the following 177-residue polypeptide: MNASLAKRYAKALFDLAREQGTLDQVEAEVRLLDEVLHATPELMDLLTNPAVSDSELAQLLKDSFGDMTAIVVNTLLVMVENDRAAEVRALPRYVRELINDYRGIAEGIVTSAYPLSATDLKDVELVFGQKLGKTLQLKNVVDEEVIGGLRVQVGYTTYDDTIETKLTRLERELLNA.

It belongs to the ATPase delta chain family. In terms of assembly, F-type ATPases have 2 components, F(1) - the catalytic core - and F(0) - the membrane proton channel. F(1) has five subunits: alpha(3), beta(3), gamma(1), delta(1), epsilon(1). F(0) has three main subunits: a(1), b(2) and c(10-14). The alpha and beta chains form an alternating ring which encloses part of the gamma chain. F(1) is attached to F(0) by a central stalk formed by the gamma and epsilon chains, while a peripheral stalk is formed by the delta and b chains.

Its subcellular location is the cell membrane. Its function is as follows. F(1)F(0) ATP synthase produces ATP from ADP in the presence of a proton or sodium gradient. F-type ATPases consist of two structural domains, F(1) containing the extramembraneous catalytic core and F(0) containing the membrane proton channel, linked together by a central stalk and a peripheral stalk. During catalysis, ATP synthesis in the catalytic domain of F(1) is coupled via a rotary mechanism of the central stalk subunits to proton translocation. This protein is part of the stalk that links CF(0) to CF(1). It either transmits conformational changes from CF(0) to CF(1) or is implicated in proton conduction. The polypeptide is ATP synthase subunit delta (Exiguobacterium sp. (strain ATCC BAA-1283 / AT1b)).